Reading from the N-terminus, the 168-residue chain is Cofilin-1-A (168 aa).

A2 is subject to N-acetylalanine. The ADF-H domain maps to 4–153 (GVMVSDDVIK…NDPCNLADKL (150 aa)). Residues 30–34 (KKRKK) carry the Nuclear localization signal motif.

This sequence belongs to the actin-binding proteins ADF family. Inactive when phosphorylated. Phosphorylation levels vary during development. Oocytes contain only the phosphorylated form, and 80-95% of cfl1 protein is phosphorylated in unfertilized eggs. Rapid dephosphorylation occurs within 30 minutes after fertilization. Phosphorylation levels increase again between the morula and blastula stages (5-8 hpf) and then decrease again as gastrulation approaches. Dephosphorylated by pdxp. In terms of tissue distribution, expressed diffusely in both animal and vegetal hemispheres of the oocyte. During cleavage, expression accumulates around the cleavage furrow, along the vegetal membrane, and later in the midbody. Strongly expressed in the animal hemisphere during blastula stages, with most cells showing expression by gastrulation. By stage 17, expression is highest in cells of the developing neuroectoderm, and at stage 24 the notochord, neural tube, neural crest, somites and some cells of the archenteron show high expression. By stage 35, expression has declined in the notochord, but remains in the neural tube, epidermis and a layer of cells in the archenteron. Also highly expressed in the retina and neuronal cell bodies at the base of the cement gland but not the cement gland itself. At stage 38, expression is widespread, being highest in the nervous system and retina. In the adult, expression is high in the brain, heart, oocyte, stomach, and low in skeletal muscle.

The protein resides in the nucleus matrix. It localises to the cytoplasm. It is found in the cytoskeleton. The protein localises to the cell cortex. Its subcellular location is the membrane. In terms of biological role, may play a role in the regulation of cell morphology and cytoskeletal organization. Binds to F-actin and exhibits pH-sensitive F-actin depolymerizing activity. Required for formation of the cleavage furrow during cytokinesis. The chain is Cofilin-1-A (cfl1-a) from Xenopus laevis (African clawed frog).